Consider the following 447-residue polypeptide: Argininosuccinate synthase (447 aa).

ATP-binding positions include 17-25 (AFSGGLDTS) and Ala-43. L-citrulline is bound at residue Tyr-99. ATP is bound by residues Gly-129 and Thr-131. L-aspartate is bound by residues Thr-131, Asn-135, and Asp-136. Asn-135 serves as a coordination point for L-citrulline. Asp-136 contacts ATP. L-citrulline is bound by residues Arg-139 and Ser-192. An ATP-binding site is contributed by Asp-194. Residues Thr-201, Glu-203, and Glu-280 each contribute to the L-citrulline site.

It belongs to the argininosuccinate synthase family. Type 2 subfamily. In terms of assembly, homotetramer.

The protein resides in the cytoplasm. It catalyses the reaction L-citrulline + L-aspartate + ATP = 2-(N(omega)-L-arginino)succinate + AMP + diphosphate + H(+). The protein operates within amino-acid biosynthesis; L-arginine biosynthesis; L-arginine from L-ornithine and carbamoyl phosphate: step 2/3. The sequence is that of Argininosuccinate synthase from Klebsiella pneumoniae subsp. pneumoniae (strain ATCC 700721 / MGH 78578).